A 455-amino-acid polypeptide reads, in one-letter code: Enolase (455 aa).

Gln-166 contributes to the (2R)-2-phosphoglycerate binding site. The active-site Proton donor is Glu-208. Residues Asp-249, Glu-311, and Asp-338 each coordinate Mg(2+). (2R)-2-phosphoglycerate contacts are provided by Lys-363, Arg-392, Ser-393, and Lys-414. The active-site Proton acceptor is Lys-363.

The protein belongs to the enolase family. The cofactor is Mg(2+).

Its subcellular location is the cytoplasm. The protein localises to the secreted. It localises to the cell surface. It carries out the reaction (2R)-2-phosphoglycerate = phosphoenolpyruvate + H2O. The protein operates within carbohydrate degradation; glycolysis; pyruvate from D-glyceraldehyde 3-phosphate: step 4/5. In terms of biological role, catalyzes the reversible conversion of 2-phosphoglycerate (2-PG) into phosphoenolpyruvate (PEP). It is essential for the degradation of carbohydrates via glycolysis. The polypeptide is Enolase (Mycoplasma mobile (strain ATCC 43663 / 163K / NCTC 11711) (Mesomycoplasma mobile)).